A 396-amino-acid chain; its full sequence is Elongation factor Tu (396 aa).

In terms of domain architecture, tr-type G spans 10 to 206 (KPHVNVGTIG…ALDASIPEPK (197 aa)). A G1 region spans residues 19 to 26 (GHVDHGKT). Position 19–26 (19–26 (GHVDHGKT)) interacts with GTP. Residue Thr-26 coordinates Mg(2+). The segment at 60–64 (GITIS) is G2. A G3 region spans residues 81 to 84 (DCPG). Residues 81 to 85 (DCPGH) and 136 to 139 (NKAD) each bind GTP. The tract at residues 136–139 (NKAD) is G4. Residues 174-176 (SAL) are G5.

It belongs to the TRAFAC class translation factor GTPase superfamily. Classic translation factor GTPase family. EF-Tu/EF-1A subfamily. In terms of assembly, monomer.

It is found in the cytoplasm. It carries out the reaction GTP + H2O = GDP + phosphate + H(+). Functionally, GTP hydrolase that promotes the GTP-dependent binding of aminoacyl-tRNA to the A-site of ribosomes during protein biosynthesis. This is Elongation factor Tu from Dichelobacter nodosus (strain VCS1703A).